The primary structure comprises 309 residues: NAD kinase 2 (309 aa).

Aspartate 81 (proton acceptor) is an active-site residue. NAD(+) is bound by residues 81-82 (DG), 155-156 (NE), aspartate 185, 196-201 (TAYALS), and asparagine 255.

The protein belongs to the NAD kinase family. A divalent metal cation serves as cofactor.

The protein localises to the cytoplasm. It carries out the reaction NAD(+) + ATP = ADP + NADP(+) + H(+). In terms of biological role, involved in the regulation of the intracellular balance of NAD and NADP, and is a key enzyme in the biosynthesis of NADP. Catalyzes specifically the phosphorylation on 2'-hydroxyl of the adenosine moiety of NAD to yield NADP. This is NAD kinase 2 from Gloeobacter violaceus (strain ATCC 29082 / PCC 7421).